The primary structure comprises 425 residues: Dihydroorotase (425 aa).

Histidine 56 and histidine 58 together coordinate Zn(2+). Substrate is bound by residues 58-60 (HYR) and asparagine 90. Zn(2+)-binding residues include aspartate 148, histidine 175, and histidine 228. Position 274 (asparagine 274) interacts with substrate. Aspartate 301 lines the Zn(2+) pocket. Residue aspartate 301 is part of the active site. Substrate is bound by residues histidine 305 and 319-320 (FG).

Belongs to the metallo-dependent hydrolases superfamily. DHOase family. Class I DHOase subfamily. Requires Zn(2+) as cofactor.

The catalysed reaction is (S)-dihydroorotate + H2O = N-carbamoyl-L-aspartate + H(+). Its pathway is pyrimidine metabolism; UMP biosynthesis via de novo pathway; (S)-dihydroorotate from bicarbonate: step 3/3. In terms of biological role, catalyzes the reversible cyclization of carbamoyl aspartate to dihydroorotate. The polypeptide is Dihydroorotase (Lactobacillus acidophilus (strain ATCC 700396 / NCK56 / N2 / NCFM)).